We begin with the raw amino-acid sequence, 771 residues long: Choline transporter-like protein 1 (771 aa).

Residues 96-116 (FLFFVFLCGWVVVAGFGIMWG) traverse the membrane as a helical segment. 2 N-linked (GlcNAc...) asparagine glycosylation sites follow: Asn-141 and Asn-259. A run of 4 helical transmembrane segments spans residues 312-332 (WWQT…WTVI), 335-355 (LLGS…LGFG), 392-412 (LVVA…ILFI), and 441-461 (LFPF…AIWL). Residue Asn-480 is glycosylated (N-linked (GlcNAc...) asparagine). 5 helical membrane-spanning segments follow: residues 514–534 (LFAF…ALAG), 566–586 (LGSI…RVLL), 603–623 (WFLM…KFLT), 662–682 (AGIL…ILSF), and 701–721 (YYFV…DLFF).

This sequence belongs to the CTL (choline transporter-like) family.

The protein localises to the membrane. This is Choline transporter-like protein 1 (chtl-1) from Caenorhabditis elegans.